The sequence spans 315 residues: Putative heme-binding peroxidase (315 aa).

His40 serves as the catalytic Proton acceptor. Residue His169 participates in heme b binding. Trp185 (tryptophan radical intermediate) is an active-site residue. A disordered region spans residues 267-286 (EEGKPLDKTAPPAGDETCPV).

This sequence belongs to the peroxidase family. Cytochrome c peroxidase subfamily. The cofactor is heme b.

Its function is as follows. Destroys radicals which are normally produced within the cells and which are toxic to biological systems. The polypeptide is Putative heme-binding peroxidase (Cryptococcus neoformans var. neoformans serotype D (strain B-3501A) (Filobasidiella neoformans)).